The following is a 69-amino-acid chain: UPF0346 protein YuiB (69 aa).

It belongs to the UPF0346 family.

The sequence is that of UPF0346 protein YuiB (yuiB) from Lactococcus lactis subsp. lactis (strain IL1403) (Streptococcus lactis).